Here is a 251-residue protein sequence, read N- to C-terminus: Ubiquinone/menaquinone biosynthesis C-methyltransferase UbiE (251 aa).

Residues T74, D95, and 123 to 124 (NA) each bind S-adenosyl-L-methionine.

It belongs to the class I-like SAM-binding methyltransferase superfamily. MenG/UbiE family.

The enzyme catalyses a 2-demethylmenaquinol + S-adenosyl-L-methionine = a menaquinol + S-adenosyl-L-homocysteine + H(+). It carries out the reaction a 2-methoxy-6-(all-trans-polyprenyl)benzene-1,4-diol + S-adenosyl-L-methionine = a 5-methoxy-2-methyl-3-(all-trans-polyprenyl)benzene-1,4-diol + S-adenosyl-L-homocysteine + H(+). It functions in the pathway quinol/quinone metabolism; menaquinone biosynthesis; menaquinol from 1,4-dihydroxy-2-naphthoate: step 2/2. Its pathway is cofactor biosynthesis; ubiquinone biosynthesis. In terms of biological role, methyltransferase required for the conversion of demethylmenaquinol (DMKH2) to menaquinol (MKH2) and the conversion of 2-polyprenyl-6-methoxy-1,4-benzoquinol (DDMQH2) to 2-polyprenyl-3-methyl-6-methoxy-1,4-benzoquinol (DMQH2). The chain is Ubiquinone/menaquinone biosynthesis C-methyltransferase UbiE from Shewanella baltica (strain OS155 / ATCC BAA-1091).